The chain runs to 280 residues: Shikimate dehydrogenase (NADP(+)) (280 aa).

Residues 20-22 (TLS) and threonine 67 contribute to the shikimate site. The Proton acceptor role is filled by lysine 71. 2 residues coordinate shikimate: asparagine 92 and aspartate 107. Residues 131-135 (GAGGA), 154-159 (NRTIDK), and leucine 224 contribute to the NADP(+) site. Tyrosine 226 lines the shikimate pocket. An NADP(+)-binding site is contributed by glycine 247.

This sequence belongs to the shikimate dehydrogenase family. In terms of assembly, homodimer.

The catalysed reaction is shikimate + NADP(+) = 3-dehydroshikimate + NADPH + H(+). It functions in the pathway metabolic intermediate biosynthesis; chorismate biosynthesis; chorismate from D-erythrose 4-phosphate and phosphoenolpyruvate: step 4/7. Involved in the biosynthesis of the chorismate, which leads to the biosynthesis of aromatic amino acids. Catalyzes the reversible NADPH linked reduction of 3-dehydroshikimate (DHSA) to yield shikimate (SA). The chain is Shikimate dehydrogenase (NADP(+)) from Carboxydothermus hydrogenoformans (strain ATCC BAA-161 / DSM 6008 / Z-2901).